A 427-amino-acid chain; its full sequence is Glutamate-1-semialdehyde 2,1-aminomutase (427 aa).

Lys-267 is subject to N6-(pyridoxal phosphate)lysine.

It belongs to the class-III pyridoxal-phosphate-dependent aminotransferase family. HemL subfamily. Homodimer. It depends on pyridoxal 5'-phosphate as a cofactor.

The protein resides in the cytoplasm. The enzyme catalyses (S)-4-amino-5-oxopentanoate = 5-aminolevulinate. It participates in porphyrin-containing compound metabolism; protoporphyrin-IX biosynthesis; 5-aminolevulinate from L-glutamyl-tRNA(Glu): step 2/2. The polypeptide is Glutamate-1-semialdehyde 2,1-aminomutase (Citrifermentans bemidjiense (strain ATCC BAA-1014 / DSM 16622 / JCM 12645 / Bem) (Geobacter bemidjiensis)).